A 333-amino-acid chain; its full sequence is Late embryogenesis abundant protein 1 (333 aa).

Disordered regions lie at residues 1 to 20 (MASR…RRAA) and 116 to 246 (KDYT…GQGQ). Residues 3–52 (SRQDRREARAEADARRAAEEIARARDERVMQAEVDARSAADEIARARADR) adopt a coiled-coil conformation. Basic and acidic residues-rich tracts occupy residues 116-163 (KDYT…KDAV), 172-219 (EATK…DATK), and 227-241 (DKAR…DATD).

It belongs to the LEA type 4 family.

The polypeptide is Late embryogenesis abundant protein 1 (LEA1) (Oryza sativa subsp. indica (Rice)).